The following is a 186-amino-acid chain: Ribosome-recycling factor (186 aa).

It belongs to the RRF family.

Its subcellular location is the cytoplasm. In terms of biological role, responsible for the release of ribosomes from messenger RNA at the termination of protein biosynthesis. May increase the efficiency of translation by recycling ribosomes from one round of translation to another. The sequence is that of Ribosome-recycling factor from Chlorobium luteolum (strain DSM 273 / BCRC 81028 / 2530) (Pelodictyon luteolum).